The primary structure comprises 517 residues: MDIIGGQHLRQMWDDLADVYGHKTALICESSGGVVNRYSYLELNQEINRTANLFYTLGIRKGNKVALHLDNCPEFIFCWFGLAKIGAIMVPINARLLREESEWILQNSQACLLVTSAQFYPMYQQIQQEDATQLRHICLTDVALPADDGVSSFTQLKNQQPATLCYAPPLSTDDTAEILFTSGTTSRPKGVVITHYNLRFAGYYSAWQCALRDDDVYMTVMPAFHIDCQCTAAMAAFSAGATFVLVEKYSARAFWGQAQKYRATITECIPMMIRTLMVQPPSANDRQHRLREVMFYLNLSEQEKDAFCERFGVRLLTSYGMTETIVGIIGDRPSDKRRWPSIGRAGFCYEAEIRDDHNRPLPAGEIGEICIKGVPGKTIFKEYFLNPKATAKVLEADGWLHTGDTGYRDEEGFFYFVDRRCNMIKRGGENVSCVELENIIATHPKIQDIVVVGIKDSIRDEAIKAFVVLNEGETLSEEEFFRFCEQNMAKFKVPSYLEIRKDLPRNCSGKIIRKNLK.

It belongs to the ATP-dependent AMP-binding enzyme family.

It catalyses the reaction 4-(trimethylamino)butanoate + ATP + CoA = 4-(trimethylamino)butanoyl-CoA + AMP + diphosphate. The catalysed reaction is crotonobetaine + ATP + CoA = crotonobetainyl-CoA + AMP + diphosphate. The enzyme catalyses (R)-carnitine + ATP + CoA = (R)-carnitinyl-CoA + AMP + diphosphate. It participates in amine and polyamine metabolism; carnitine metabolism. Its function is as follows. Catalyzes the transfer of CoA to carnitine, generating the initial carnitinyl-CoA needed for the CaiB reaction cycle. Also has activity toward crotonobetaine and gamma-butyrobetaine. The polypeptide is Crotonobetaine/carnitine--CoA ligase (Shigella flexneri).